The sequence spans 400 residues: Subtilisin-like protease 11 (400 aa).

The signal sequence occupies residues 1–19 (MGLFKVIFTAVAALSAVDA). A propeptide spanning residues 20-117 (AELLSSAKSK…VEHDRHVYIS (98 aa)) is cleaved from the precursor. One can recognise an Inhibitor I9 domain in the interval 35-116 (SYLVVMKDSV…FVEHDRHVYI (82 aa)). The region spanning 127-400 (SWGLGRVSHR…NKLLYNRSGK (274 aa)) is the Peptidase S8 domain. The N-linked (GlcNAc...) asparagine glycan is linked to Asn138. Asp159 functions as the Charge relay system in the catalytic mechanism. Residue Asn181 is glycosylated (N-linked (GlcNAc...) asparagine). His191 acts as the Charge relay system in catalysis. Residues Asn252 and Asn337 are each glycosylated (N-linked (GlcNAc...) asparagine). The Charge relay system role is filled by Ser346. N-linked (GlcNAc...) asparagine glycans are attached at residues Asn388 and Asn396.

This sequence belongs to the peptidase S8 family.

The protein localises to the secreted. Functionally, secreted subtilisin-like serine protease with keratinolytic activity that contributes to pathogenicity. In Trichophyton verrucosum (strain HKI 0517), this protein is Subtilisin-like protease 11 (SUB11).